Consider the following 170-residue polypeptide: Ureidoglycolate lyase (170 aa).

The protein belongs to the ureidoglycolate lyase family. Homodimer. It depends on Ni(2+) as a cofactor.

It carries out the reaction (S)-ureidoglycolate = urea + glyoxylate. The protein operates within nitrogen metabolism; (S)-allantoin degradation. Its function is as follows. Catalyzes the catabolism of the allantoin degradation intermediate (S)-ureidoglycolate, generating urea and glyoxylate. Involved in the utilization of allantoin as nitrogen source. This Pseudomonas syringae pv. syringae (strain B728a) protein is Ureidoglycolate lyase.